The following is a 782-amino-acid chain: Nezukol synthase KSL3 (782 aa).

Mg(2+) contacts are provided by Asp-529, Asp-533, Asn-677, and Glu-685. The short motif at 529-533 (DDVFD) is the DDXXD motif element.

Belongs to the terpene synthase family. Mg(2+) is required as a cofactor. As to expression, highly expressed in leaves, and, at low levels, in stems, but barely in roots and flowers.

It carries out the reaction (+)-copalyl diphosphate = miltiradiene + diphosphate. The enzyme catalyses (+)-copalyl diphosphate + H2O = nezukol + diphosphate. It participates in secondary metabolite biosynthesis; terpenoid biosynthesis. Functionally, involved in the biosynthesis of ent-kaurene diterpenoids natural products such as oridonin, miltiradiene, eriocalyxin B and nezukol, known to exhibit antitumor, anti-inflammatory and antibacterial activities. Catalyzes the conversion of (+)-copalyl diphosphate ((+)-CPP) to nezukol and miltiradiene. The reaction mechanism proceeds via the ionization of the diphosphate group of (+)-CPP, followed by formation of an intermediary pimar-15-en-8-yl(+) carbocation and neutralization of the carbocation by water capture at C-8 to yield nezukol. Can interact with ent-copalyl diphosphate (ent-CPP) but seems unable to use it as substrate. In Isodon rubescens (Rabdosia rubescens), this protein is Nezukol synthase KSL3.